The following is a 424-amino-acid chain: Inhibin beta A chain (424 aa).

The signal sequence occupies residues 1-20 (MPLLWLRGFLLASCWIIVRS). The propeptide occupies 21–308 (SPTPGSEGHG…EDHPHRRRRR (288 aa)). N-linked (GlcNAc...) asparagine glycosylation is present at N165. Basic and acidic residues predominate over residues 264–275 (EVDGDGKKKDGS). Positions 264–306 (EVDGDGKKKDGSDGGLEEEKEQSHRPFLMLQARQSEDHPHRRR) are disordered. Intrachain disulfides connect C312-C320, C319-C389, C348-C421, and C352-C423.

This sequence belongs to the TGF-beta family. As to quaternary structure, dimeric, linked by one or more disulfide bonds. Inhibin A is a dimer of alpha/INHA and beta-A/INHBA. Activin A is a homodimer of beta-A/INHBA. Activin AB is a dimer of beta-A/INHBA and beta-B/INHBB. Interacts with FST and FSTL3; these interactions prevent activin A interaction to its type II receptor. Activin A interacts with ACVR2A. Activin A interacts with BMPR2. Inhibin A interacts with ACVR1; this interaction creates a non-signaling complex (NSC) that inhibits ACVR1-mediated BMP signaling. Inhibin A interacts with ACVR2A.

It localises to the secreted. Its function is as follows. Inhibins/activins are involved in regulating a number of diverse functions such as hypothalamic and pituitary hormone secretion, gonadal hormone secretion, germ cell development and maturation, erythroid differentiation, insulin secretion, nerve cell survival, embryonic axial development or bone growth, depending on their subunit composition. In terms of biological role, activin A is a homodimer of INHBA that plays a role in several essential biological processes including embryonic development, stem cell maintenance and differentiation, haematopoiesis, cell proliferation and tissue fibrosis. Signals through type I (such as ACVR1B or ACVR1C) and type II receptors (such as ACVR2A, ACVR2B or BMPR2) which, upon ligand binding, phosphorylate SMAD2 and SMAD3 intracellular signaling mediators that form a complex with SMAD4, translocate to the nucleus and modulate gene expression. Can also activate alternative non-canonical intracellular signaling pathways including the p38 MAPK, extracellular signal-regulated kinases 1/2 (ERK1/2) and c-Jun N-terminal kinases (JNKs) to modulate cell migration and differentiation. Alternatively, promotes osteoblastic differentiation via ACVRL1-SMAD1/5/9 pathway. In addition, can engage the type I receptor ACVR1 to form an ACVR1-activin A-type II receptor non-signaling complex (NSC) that renders receptors unavailable for engagement with BMPs, hence resulting in an apparent inhibition of ACVR1-mediated BMP signaling. Functionally, inhibin A is a dimer of alpha/INHA and beta-A/INHBA that functions as a feedback regulator in the hypothalamic-pituitary-gonadal (HPG) axis. Inhibits the secretion of FSH from the anterior pituitary gland by acting on pituitary gonadotrope cells. Antagonizes activin A by binding to the proteoglycan, betaglycan, and forming a stable complex with and, thereby, sequestering type II activin receptors while excluding type I receptor. The sequence is that of Inhibin beta A chain (Inhba) from Rattus norvegicus (Rat).